Reading from the N-terminus, the 250-residue chain is Cytochrome c oxidase subunit 2 (250 aa).

The Mitochondrial intermembrane portion of the chain corresponds to 1 to 27 (MGLLFNNLIMNFDAPSPWGIYFQDSAT). A helical transmembrane segment spans residues 28–61 (PQMEGLVELHDNIMYYLVVILFGVGWILLSIIRN). Topologically, residues 62–77 (YISTKSPISHKYLNHG) are mitochondrial matrix. A helical transmembrane segment spans residues 78 to 107 (TLIELIWTITPAVILILIAFPSFKLLYLMD). The Mitochondrial intermembrane segment spans residues 108–250 (EVSDPSMSVL…EKFLTWLEEQ (143 aa)). 6 residues coordinate Cu cation: histidine 185, cysteine 220, glutamate 222, cysteine 224, histidine 228, and methionine 231. Position 222 (glutamate 222) interacts with Mg(2+).

This sequence belongs to the cytochrome c oxidase subunit 2 family. As to quaternary structure, component of the cytochrome c oxidase (complex IV, CIV), a multisubunit enzyme composed of 11 subunits. The complex is composed of a catalytic core of 3 subunits Cox1, Cox2 and Cox3, encoded in the mitochondrial DNA, and 8 supernumerary subunits Cox4, Cox5a/Cox5, Cox6, Cox7, Cox8, Cox7a/Cox9, Cox6b/Cox12 and Cox6a/Cox13, which are encoded in the nuclear genome. The complex exists as a monomer or a dimer and forms respiratory supercomplexes (SCs) in the inner mitochondrial membrane with NADH-ubiquinone oxidoreductase (complex I, CI) and ubiquinol-cytochrome c oxidoreductase (cytochrome b-c1 complex, complex III, CIII), resulting in various different assemblies (supercomplexes I(1)IV(1), I(1)III(3)IV(2), III(2)IV(1) and III(2)IV(2) as well as larger supercomplexes of compositions like I(1)III(2)IV(5-6)). Cu cation serves as cofactor.

The protein resides in the mitochondrion inner membrane. The enzyme catalyses 4 Fe(II)-[cytochrome c] + O2 + 8 H(+)(in) = 4 Fe(III)-[cytochrome c] + 2 H2O + 4 H(+)(out). Functionally, component of the cytochrome c oxidase, the last enzyme in the mitochondrial electron transport chain which drives oxidative phosphorylation. The respiratory chain contains 3 multisubunit complexes succinate dehydrogenase (complex II, CII), ubiquinol-cytochrome c oxidoreductase (cytochrome b-c1 complex, complex III, CIII) and cytochrome c oxidase (complex IV, CIV), that cooperate to transfer electrons derived from NADH and succinate to molecular oxygen, creating an electrochemical gradient over the inner membrane that drives transmembrane transport and the ATP synthase. Cytochrome c oxidase is the component of the respiratory chain that catalyzes the reduction of oxygen to water. Electrons originating from reduced cytochrome c in the intermembrane space (IMS) are transferred via the dinuclear copper A center (CU(A)) of Cox2 and heme A of Cox1 to the active site in Cox1, a binuclear center (BNC) formed by heme A3 and copper B (CU(B)). The BNC reduces molecular oxygen to 2 water molecules using 4 electrons from cytochrome c in the IMS and 4 protons from the mitochondrial matrix. This Neurospora crassa (strain ATCC 24698 / 74-OR23-1A / CBS 708.71 / DSM 1257 / FGSC 987) protein is Cytochrome c oxidase subunit 2 (cox-2).